The sequence spans 396 residues: DNA excision repair protein ERCC-8 (396 aa).

WD repeat units lie at residues 33–73 (NKDR…LYDL), 88–129 (CSIG…VWDT), 133–173 (QTAD…LCDL), 177–216 (SCSHILQGHRQEILAVSWSPRYDYILATASADSRVKLWDV), 235–274 (QAVESANTAHNGKVNGLCFTSDGLHLLTVGTDNRMRLWNS), 281–321 (LVNY…VYTV), and 325–363 (EQITMLKGHYKTVDCCVFQSNFQELYSGSRDCNILAWVP). Residues 371–396 (DDDETTTKSQLNPAFEDAWSSSDEEG) form a disordered region. 3 positions are modified to phosphoserine: serine 390, serine 391, and serine 392.

As to quaternary structure, part of the CSA complex (also named DCX(ERCC8) complex), a DCX E3 ubiquitin-protein ligase complex containing ERCC8, RBX1, DDB1 and CUL4A; the CSA complex interacts with RNA polymerase II; upon UV irradiation it interacts with the COP9 signalosome and preferentially with the hyperphosphorylated form of RNA polymerase II. Interacts with ERCC6/CSB (via CIM motif); promoting recruitment to lesion-stalled RNA polymerase II (Pol II). Interacts with KIAA1530/UVSSA. Interacts with a subunit of RNA polymerase II TFIIH.

Its subcellular location is the nucleus. It localises to the chromosome. It is found in the nucleus matrix. It functions in the pathway protein modification; protein ubiquitination. Functionally, substrate-recognition component of the CSA complex, a DCX (DDB1-CUL4-X-box) E3 ubiquitin-protein ligase complex, involved in transcription-coupled nucleotide excision repair (TC-NER), a process during which RNA polymerase II-blocking lesions are rapidly removed from the transcribed strand of active genes. Following recruitment to lesion-stalled RNA polymerase II (Pol II), the CSA complex mediates ubiquitination of Pol II subunit POLR2A/RPB1 at 'Lys-1268', a critical TC-NER checkpoint, governing RNA Pol II stability and initiating DNA damage excision by TFIIH recruitment. The CSA complex also promotes the ubiquitination and subsequent proteasomal degradation of ERCC6/CSB in a UV-dependent manner; ERCC6 degradation is essential for the recovery of RNA synthesis after transcription-coupled repair. Also plays a role in DNA double-strand breaks (DSSBs) repair by non-homologous end joining (NHEJ). In Homo sapiens (Human), this protein is DNA excision repair protein ERCC-8.